Reading from the N-terminus, the 99-residue chain is Integration host factor subunit alpha (99 aa).

Belongs to the bacterial histone-like protein family. As to quaternary structure, heterodimer of an alpha and a beta chain.

In terms of biological role, this protein is one of the two subunits of integration host factor, a specific DNA-binding protein that functions in genetic recombination as well as in transcriptional and translational control. The polypeptide is Integration host factor subunit alpha (Xylella fastidiosa (strain M12)).